We begin with the raw amino-acid sequence, 121 residues long: Small ribosomal subunit protein uS13 (121 aa).

Positions 94-121 are disordered; sequence GLPVRGQSSKTNARTVKGPRKTVANKKK. Residues 110–121 are compositionally biased toward basic residues; sequence KGPRKTVANKKK.

Belongs to the universal ribosomal protein uS13 family. Part of the 30S ribosomal subunit. Forms a loose heterodimer with protein S19. Forms two bridges to the 50S subunit in the 70S ribosome.

In terms of biological role, located at the top of the head of the 30S subunit, it contacts several helices of the 16S rRNA. In the 70S ribosome it contacts the 23S rRNA (bridge B1a) and protein L5 of the 50S subunit (bridge B1b), connecting the 2 subunits; these bridges are implicated in subunit movement. Contacts the tRNAs in the A and P-sites. This chain is Small ribosomal subunit protein uS13, found in Mesoplasma florum (strain ATCC 33453 / NBRC 100688 / NCTC 11704 / L1) (Acholeplasma florum).